Reading from the N-terminus, the 912-residue chain is Probable dipeptidyl-aminopeptidase B (912 aa).

A compositionally biased stretch (basic and acidic residues) spans 1 to 25 (MAAEKGESSDEERKPLTRDSMEYRD). Disordered stretches follow at residues 1–31 (MAAE…NSLH) and 49–70 (GSTH…SDDG). Residues 1 to 92 (MAAEKGESSD…GGKPVQKKVK (92 aa)) lie on the Cytoplasmic side of the membrane. A helical; Signal-anchor for type II membrane protein transmembrane segment spans residues 93–113 (IVLGFLLFLCLSGWSLSFVLF). The Vacuolar segment spans residues 114 to 912 (LFGGHESSKT…RAAIWVGLSI (799 aa)). Asn-130, Asn-210, Asn-346, Asn-569, and Asn-656 each carry an N-linked (GlcNAc...) asparagine glycan. Residue Ser-751 is the Charge relay system of the active site. Residue Asn-810 is glycosylated (N-linked (GlcNAc...) asparagine). Active-site charge relay system residues include Asp-828 and His-861. N-linked (GlcNAc...) asparagine glycosylation occurs at Asn-897.

This sequence belongs to the peptidase S9B family.

It localises to the vacuole membrane. It catalyses the reaction Release of an N-terminal dipeptide, Xaa-Yaa-|-Zaa-, from a polypeptide, preferentially when Yaa is Pro, provided Zaa is neither Pro nor hydroxyproline.. Type IV dipeptidyl-peptidase which removes N-terminal dipeptides sequentially from polypeptides having unsubstituted N-termini provided that the penultimate residue is proline. This is Probable dipeptidyl-aminopeptidase B (DAPB) from Paracoccidioides lutzii (strain ATCC MYA-826 / Pb01) (Paracoccidioides brasiliensis).